Consider the following 506-residue polypeptide: Glutamate--tRNA ligase (506 aa).

A 'HIGH' region motif is present at residues 24 to 34 (PSPTGLQHIGG). Zn(2+)-binding residues include Cys121, Cys123, Cys148, and His150. Residues 266–270 (KLSKR) carry the 'KMSKS' region motif. ATP is bound at residue Lys269.

It belongs to the class-I aminoacyl-tRNA synthetase family. Glutamate--tRNA ligase type 1 subfamily. As to quaternary structure, monomer. Zn(2+) serves as cofactor.

It localises to the cytoplasm. The catalysed reaction is tRNA(Glu) + L-glutamate + ATP = L-glutamyl-tRNA(Glu) + AMP + diphosphate. Catalyzes the attachment of glutamate to tRNA(Glu) in a two-step reaction: glutamate is first activated by ATP to form Glu-AMP and then transferred to the acceptor end of tRNA(Glu). The polypeptide is Glutamate--tRNA ligase (Borrelia recurrentis (strain A1)).